The following is a 322-amino-acid chain: Probable heme-iron transport system permease protein IsdF (322 aa).

The next 9 helical transmembrane spans lie at 9–29, 61–81, 89–109, 114–134, 143–163, 179–199, 233–253, 267–287, and 294–314; these read LLFL…FVTG, ILIA…LQAA, ANII…MLFI, FYLP…IILL, VSMI…LEIL, IWSD…LTLL, VFLA…GIIV, VLIP…DLLG, and LEIP…IYLI.

The protein belongs to the binding-protein-dependent transport system permease family. FecCD subfamily.

It is found in the cell membrane. Part of the binding-protein-dependent transport system for heme-iron. Responsible for the translocation of the substrate across the membrane. The protein is Probable heme-iron transport system permease protein IsdF (isdF) of Staphylococcus aureus (strain MSSA476).